Reading from the N-terminus, the 333-residue chain is MTTPNKINFPPPKLQIDFAFALKRFRAVYLQSALLETVRDMDIAELDRQLSKYVPPADLATLAQYGLRAELLFAVPAVLEANPHLLGYYRLLMGYSQKEFYGRDKGFGVGCFKSMEEKGKAGKAAVADLHDLCVAFCATASALLAGVGPLRVSRELLDDLTLLTVGPQLRGGANNQRGADGIVLVFEIIREIVAHAAAEVRESAIEVNSATGRPVLIEFAPDPDIIIREEMENQHYRNVVAIEVKSGTDVSNIHNRIGEAEKSHQKARQLGFTECWTVVNVGRLDMVKARSESPSTDRFYSLTALSLRAGDEYADFRRRVLSLTAIPARPANP.

Belongs to the XcyI type II restriction endonuclease family. As to quaternary structure, monomer. Mg(2+) serves as cofactor.

The catalysed reaction is Endonucleolytic cleavage of DNA to give specific double-stranded fragments with terminal 5'-phosphates.. Functionally, a P subtype restriction enzyme that recognizes the double-stranded sequence 5'-CCCGGG-3' and cleaves after C-1. The polypeptide is Type II restriction enzyme XcyI (xcyIR) (Xanthomonas campestris pv. cyanopsidis).